Here is a 179-residue protein sequence, read N- to C-terminus: NADH-quinone oxidoreductase subunit B (179 aa).

Positions 35, 36, 100, and 129 each coordinate [4Fe-4S] cluster.

Belongs to the complex I 20 kDa subunit family. NDH-1 is composed of 14 different subunits. Subunits NuoB, C, D, E, F, and G constitute the peripheral sector of the complex. Requires [4Fe-4S] cluster as cofactor.

Its subcellular location is the cell inner membrane. It carries out the reaction a quinone + NADH + 5 H(+)(in) = a quinol + NAD(+) + 4 H(+)(out). Its function is as follows. NDH-1 shuttles electrons from NADH, via FMN and iron-sulfur (Fe-S) centers, to quinones in the respiratory chain. Couples the redox reaction to proton translocation (for every two electrons transferred, four hydrogen ions are translocated across the cytoplasmic membrane), and thus conserves the redox energy in a proton gradient. This chain is NADH-quinone oxidoreductase subunit B, found in Aquifex aeolicus (strain VF5).